The following is an 88-amino-acid chain: Large ribosomal subunit protein bL31B (88 aa).

The protein belongs to the bacterial ribosomal protein bL31 family. Type B subfamily. Part of the 50S ribosomal subunit.

The polypeptide is Large ribosomal subunit protein bL31B (Leuconostoc citreum (strain KM20)).